Reading from the N-terminus, the 187-residue chain is Calmodulin-like protein 1 (187 aa).

Alanine 2 carries the post-translational modification N-acetylalanine. 4 EF-hand domains span residues 8–43 (EQIG…LGQN), 44–79 (PTEA…KLRD), 81–116 (DSEE…IGER), and 117–152 (LTDE…KKRR). Positions 21, 23, 25, 27, 32, 57, 59, 61, 63, 68, 94, 96, 98, 105, 130, 132, 134, 136, and 141 each coordinate Ca(2+). Positions 153-187 (KRIEEKRDHDGGSRTKSAGPSAAPASKRGQKCVIL) are disordered. Basic and acidic residues predominate over residues 154-165 (RIEEKRDHDGGS). Low complexity predominate over residues 169 to 178 (SAGPSAAPAS). Cysteine 184 is subject to Cysteine methyl ester. The S-farnesyl cysteine moiety is linked to residue cysteine 184. Positions 185–187 (VIL) are cleaved as a propeptide — removed in mature form.

It belongs to the calmodulin family.

It localises to the membrane. Functionally, calcium-binding protein that binds and activates CAMK1, a calcium/calmodulin-dependent kinase. This Oryza sativa subsp. japonica (Rice) protein is Calmodulin-like protein 1 (CML1).